The following is a 143-amino-acid chain: ATP synthase subunit b' (143 aa).

A helical transmembrane segment spans residues 6–26; sequence ATLPFMALQFLLLAAVLNAIF.

It belongs to the ATPase B chain family. As to quaternary structure, F-type ATPases have 2 components, F(1) - the catalytic core - and F(0) - the membrane proton channel. F(1) has five subunits: alpha(3), beta(3), gamma(1), delta(1), epsilon(1). F(0) has four main subunits: a(1), b(1), b'(1) and c(10-14). The alpha and beta chains form an alternating ring which encloses part of the gamma chain. F(1) is attached to F(0) by a central stalk formed by the gamma and epsilon chains, while a peripheral stalk is formed by the delta, b and b' chains.

Its subcellular location is the cellular thylakoid membrane. Its function is as follows. F(1)F(0) ATP synthase produces ATP from ADP in the presence of a proton or sodium gradient. F-type ATPases consist of two structural domains, F(1) containing the extramembraneous catalytic core and F(0) containing the membrane proton channel, linked together by a central stalk and a peripheral stalk. During catalysis, ATP synthesis in the catalytic domain of F(1) is coupled via a rotary mechanism of the central stalk subunits to proton translocation. Component of the F(0) channel, it forms part of the peripheral stalk, linking F(1) to F(0). The b'-subunit is a diverged and duplicated form of b found in plants and photosynthetic bacteria. In Nostoc punctiforme (strain ATCC 29133 / PCC 73102), this protein is ATP synthase subunit b'.